Reading from the N-terminus, the 198-residue chain is A-type ATP synthase subunit E (198 aa).

This sequence belongs to the V-ATPase E subunit family. As to quaternary structure, has multiple subunits with at least A(3), B(3), C, D, E, F, H, I and proteolipid K(x).

It is found in the cell membrane. Its function is as follows. Component of the A-type ATP synthase that produces ATP from ADP in the presence of a proton gradient across the membrane. In Pyrococcus horikoshii (strain ATCC 700860 / DSM 12428 / JCM 9974 / NBRC 100139 / OT-3), this protein is A-type ATP synthase subunit E.